A 156-amino-acid chain; its full sequence is Small ribosomal subunit protein bS6 (156 aa).

The interval 95–156 is disordered; it reads AITETSPLAK…DRDEQSEDSE (62 aa). The span at 117-126 shows a compositional bias: basic and acidic residues; it reads RSGRDRDESG.

Belongs to the bacterial ribosomal protein bS6 family.

Binds together with bS18 to 16S ribosomal RNA. In Nitrosococcus oceani (strain ATCC 19707 / BCRC 17464 / JCM 30415 / NCIMB 11848 / C-107), this protein is Small ribosomal subunit protein bS6.